The primary structure comprises 312 residues: Olfactory receptor 7G3 (312 aa).

Residues 1-25 are Extracellular-facing; it reads MKAGNFSDTPEFFLLGLSGDPELQP. Residue Asn5 is glycosylated (N-linked (GlcNAc...) asparagine). A helical transmembrane segment spans residues 26-46; that stretch reads ILFMLFLSMYLATMLGNLLII. At 47-54 the chain is on the cytoplasmic side; sequence LAVNSDSH. Residues 55–75 form a helical membrane-spanning segment; it reads LHTPMYFLLSILSLVDICFTS. Residues 76–99 are Extracellular-facing; sequence TTMPKMLVNIQAQAQSINYTGCLT. Asn93 carries N-linked (GlcNAc...) asparagine glycosylation. Cys97 and Cys189 are oxidised to a cystine. A helical membrane pass occupies residues 100 to 120; it reads QICFVLVFVGLENGILVMMAY. Over 121–139 the chain is Cytoplasmic; that stretch reads DRFVAICHPLRYNVIMNPK. The helical transmembrane segment at 140-160 threads the bilayer; that stretch reads LCGLLLLLSFIVSVLDALLHT. The Extracellular portion of the chain corresponds to 161 to 197; the sequence is LMVLQLTFCIDLEIPHFFCELAHILKLACSDVLINNI. A helical membrane pass occupies residues 198–217; the sequence is LVYLVTSLLGVVPLSGIIFS. The Cytoplasmic portion of the chain corresponds to 218–237; the sequence is YTRIVSSVMKIPSAGGKYKA. Residues 238–258 traverse the membrane as a helical segment; sequence FSICGSHLIVVSLFYGTGFGV. The Extracellular portion of the chain corresponds to 259–271; sequence YLSSGATHSSRKG. Residues 272-292 traverse the membrane as a helical segment; the sequence is AIASVMYTVVTPMLNPLIYSL. The Cytoplasmic portion of the chain corresponds to 293–312; sequence RNKDMLKALRKLISRIPSFH.

Belongs to the G-protein coupled receptor 1 family.

The protein localises to the cell membrane. Odorant receptor. The sequence is that of Olfactory receptor 7G3 (OR7G3) from Homo sapiens (Human).